Reading from the N-terminus, the 141-residue chain is MADRLTQLQDTVNQQAEHFCNSIGILQQCSVPSKFPGFERTGSQTPQQNQQEDYAQLFSTLISRCAKDIDTLIESLPSEESSIELQVQALKRLEIENQESAEKLEEVVRKGELLLEKIQAALSDIAQSQLDMQYSSSPKKQ.

Residues 79–122 (EESSIELQVQALKRLEIENQESAEKLEEVVRKGELLLEKIQAAL) adopt a coiled-coil conformation.

This sequence belongs to the Mediator complex subunit 21 family. As to quaternary structure, component of the Mediator complex.

The protein resides in the nucleus. Functionally, component of the Mediator complex, a coactivator involved in the regulated transcription of nearly all RNA polymerase II-dependent genes. Mediator functions as a bridge to convey information from gene-specific regulatory proteins to the basal RNA polymerase II transcription machinery. Mediator is recruited to promoters by direct interactions with regulatory proteins and serves as a scaffold for the assembly of a functional preinitiation complex with RNA polymerase II and the general transcription factors. The polypeptide is Mediator of RNA polymerase II transcription subunit 21 (MED21) (Aedes aegypti (Yellowfever mosquito)).